Consider the following 630-residue polypeptide: Eukaryotic translation initiation factor 2-alpha kinase 1 (630 aa).

Residues 1 to 40 are disordered; it reads MQGGNSGVRKREEEGDGAGAVAAPPAIDFPAEGPDPEYDE. The SIFI-degron signature appears at 85–104; sequence LRSRQVFKLLCQTFIKMGLL. One can recognise a Protein kinase domain in the interval 167–583; that stretch reads FEELAILGKG…AIQLLQSELF (417 aa). Residues 173–181 and Lys-196 contribute to the ATP site; that span reads LGKGGYGRV. Residues 259-301 form a disordered region; the sequence is DQEEDREQCGVKNDESSSSSIIFAEPTPEKEKRFGESDTENQN. Thr-285 is subject to Phosphothreonine. Positions 285–294 are enriched in basic and acidic residues; that stretch reads TPEKEKRFGE. An HRM 1 repeat occupies 410–415; it reads ACPYVM. Asp-442 (proton acceptor) is an active-site residue. Thr-486 and Thr-488 each carry phosphothreonine; by autocatalysis. Residue Thr-493 is modified to Phosphothreonine. One copy of the HRM 2 repeat lies at 552–557; the sequence is RCPVQA.

This sequence belongs to the protein kinase superfamily. Ser/Thr protein kinase family. GCN2 subfamily. As to quaternary structure, synthesized in an inactive form that binds to the N-terminal domain of CDC37. Has to be associated with a multiprotein complex containing Hsp90, CDC37 and PPP5C for maturation and activation by autophosphorylation. The phosphatase PPP5C modulates this activation. Homodimer; homodimerizes in presence of heme, forming a disulfide-linked inactive homodimer. Interacts with DELE1; binds both to full-length DELE1 and processed form of DELE1 (S-DELE1) in response to stress, leading to activate its protein kinase activity and trigger the integrated stress response (ISR). Post-translationally, activated by autophosphorylation; phosphorylated predominantly on serine and threonine residues, but also on tyrosine residues. Autophosphorylation at Thr-488 is required for kinase activation. The active autophosphorylated form apparently is largely refractory to cellular heme fluctuations. Ubiquitinated and degraded by the SIFI complex once the mitochondrial stress has been resolved, thereby providing stress response silencing. Within the SIFI complex, UBR4 initiates ubiquitin chain that are further elongated or branched by KCMF1.

The catalysed reaction is L-seryl-[protein] + ATP = O-phospho-L-seryl-[protein] + ADP + H(+). It catalyses the reaction L-threonyl-[protein] + ATP = O-phospho-L-threonyl-[protein] + ADP + H(+). With respect to regulation, in normal conditions, the protein kinase activity is inhibited; inhibition is relieved by various stress conditions. Inhibited by heme: in presence of heme, forms a disulfide-linked inactive homodimer. Heme depletion relieves inhibition and stimulates kinase activity by autophosphorylation. Inhibited by the heme metabolites biliverdin and bilirubin. Induced by oxidative stress generated by arsenite treatment. Binding of nitric oxide (NO) to the heme iron in the N-terminal heme-binding domain activates the kinase activity, while binding of carbon monoxide (CO) suppresses kinase activity. Protein kinase activity is also activated upon binding to DELE1 in response to various stress, triggering the integrated stress response (ISR): activated by full-length DELE1 in response to iron deficiency, while it is activated by the processed form of DELE1 (S-DELE1) in response to mitochondrial stress. Metabolic-stress sensing protein kinase that phosphorylates the alpha subunit of eukaryotic translation initiation factor 2 (EIF2S1/eIF-2-alpha) in response to various stress conditions. Key activator of the integrated stress response (ISR) required for adaptation to various stress, such as heme deficiency, oxidative stress, osmotic shock, mitochondrial dysfunction and heat shock. EIF2S1/eIF-2-alpha phosphorylation in response to stress converts EIF2S1/eIF-2-alpha in a global protein synthesis inhibitor, leading to a global attenuation of cap-dependent translation, while concomitantly initiating the preferential translation of ISR-specific mRNAs, such as the transcriptional activator ATF4, and hence allowing ATF4-mediated reprogramming. Acts as a key sensor of heme-deficiency: in normal conditions, binds hemin via a cysteine thiolate and histidine nitrogenous coordination, leading to inhibit the protein kinase activity. This binding occurs with moderate affinity, allowing it to sense the heme concentration within the cell: heme depletion relieves inhibition and stimulates kinase activity, activating the ISR. Thanks to this unique heme-sensing capacity, plays a crucial role to shut off protein synthesis during acute heme-deficient conditions. In red blood cells (RBCs), controls hemoglobin synthesis ensuring a coordinated regulation of the synthesis of its heme and globin moieties. It thereby plays an essential protective role for RBC survival in anemias of iron deficiency. Iron deficiency also triggers activation by full-length DELE1. Also activates the ISR in response to mitochondrial dysfunction: HRI/EIF2AK1 protein kinase activity is activated upon binding to the processed form of DELE1 (S-DELE1), thereby promoting the ATF4-mediated reprogramming. Also acts as an activator of mitophagy in response to mitochondrial damage: catalyzes phosphorylation of eIF-2-alpha (EIF2S1) following activation by S-DELE1, thereby promoting mitochondrial localization of EIF2S1, triggering PRKN-independent mitophagy. In Homo sapiens (Human), this protein is Eukaryotic translation initiation factor 2-alpha kinase 1.